We begin with the raw amino-acid sequence, 593 residues long: Capsid protein 1 (593 aa).

The protein belongs to the NCLDV major capsid protein family.

It localises to the virion. This chain is Capsid protein 1, found in Acanthamoeba polyphaga mimivirus (APMV).